Here is a 108-residue protein sequence, read N- to C-terminus: Urease subunit beta (108 aa).

The protein belongs to the urease beta subunit family. Heterotrimer of UreA (gamma), UreB (beta) and UreC (alpha) subunits. Three heterotrimers associate to form the active enzyme.

Its subcellular location is the cytoplasm. It carries out the reaction urea + 2 H2O + H(+) = hydrogencarbonate + 2 NH4(+). It functions in the pathway nitrogen metabolism; urea degradation; CO(2) and NH(3) from urea (urease route): step 1/1. The protein is Urease subunit beta of Nocardia farcinica (strain IFM 10152).